Reading from the N-terminus, the 128-residue chain is KRAB domain-containing protein 1 (128 aa).

In terms of domain architecture, KRAB spans 15-86; the sequence is VAFEDVAVYF…QPQGVLSRND (72 aa).

This is KRAB domain-containing protein 1 (KRBOX1) from Homo sapiens (Human).